Here is a 930-residue protein sequence, read N- to C-terminus: Translation initiation factor IF-2 (930 aa).

The tract at residues 29-316 (GEFVKSASST…GRKSKRAKRA (288 aa)) is disordered. Pro residues predominate over residues 81–120 (RPGPKPGPPVAQQPAAPAAPPAAPPAPPTPAAAPPSPAPA). Low complexity predominate over residues 121-135 (APAAATPAEPAAPSA). 2 stretches are compositionally biased toward pro residues: residues 136–155 (RPGPTPGPRPGPSAPKPGAP) and 180–191 (PRPQGPGGPRPG). A compositionally biased stretch (gly residues) spans 192-204 (PGAGGPRPGGGPR). Pro residues predominate over residues 228 to 240 (GGGPRPGGGPRPT). Residues 241-301 (PGGAGRPGGG…GAAGAFGRPG (61 aa)) show a composition bias toward gly residues. Over residues 305 to 314 (KRGRKSKRAK) the composition is skewed to basic residues. One can recognise a tr-type G domain in the interval 426-598 (IRPPVVTVMG…VILTADASLD (173 aa)). Positions 435-442 (GHVDHGKT) are G1. 435-442 (GHVDHGKT) contributes to the GTP binding site. Positions 460–464 (GITQH) are G2. A G3 region spans residues 485–488 (DTPG). GTP-binding positions include 485–489 (DTPGH) and 539–542 (NKID). Residues 539-542 (NKID) are G4. The tract at residues 575 to 577 (SAK) is G5.

This sequence belongs to the TRAFAC class translation factor GTPase superfamily. Classic translation factor GTPase family. IF-2 subfamily.

It is found in the cytoplasm. Functionally, one of the essential components for the initiation of protein synthesis. Protects formylmethionyl-tRNA from spontaneous hydrolysis and promotes its binding to the 30S ribosomal subunits. Also involved in the hydrolysis of GTP during the formation of the 70S ribosomal complex. This chain is Translation initiation factor IF-2, found in Mycolicibacterium vanbaalenii (strain DSM 7251 / JCM 13017 / BCRC 16820 / KCTC 9966 / NRRL B-24157 / PYR-1) (Mycobacterium vanbaalenii).